The chain runs to 382 residues: Carboxynorspermidine/carboxyspermidine decarboxylase (382 aa).

N6-(pyridoxal phosphate)lysine is present on Lys-41. Substrate is bound by residues Glu-236 and Asp-272.

It belongs to the Orn/Lys/Arg decarboxylase class-II family. NspC subfamily. As to quaternary structure, homodimer. The cofactor is pyridoxal 5'-phosphate.

It is found in the cytoplasm. The catalysed reaction is carboxynorspermidine + H(+) = norspermidine + CO2. It catalyses the reaction carboxyspermidine + H(+) = spermidine + CO2. Its function is as follows. Catalyzes the decarboxylation of carboxynorspermidine and carboxyspermidine in vitro. In vivo, responsible for synthesizing spermidine, but not sym-norspermidine. The polypeptide is Carboxynorspermidine/carboxyspermidine decarboxylase (Campylobacter jejuni subsp. jejuni serotype O:6 (strain 81116 / NCTC 11828)).